Here is a 193-residue protein sequence, read N- to C-terminus: 2',3'-cyclic-nucleotide 3'-phosphodiesterase (193 aa).

The active-site Proton donor/acceptor is His-40. Thr-42 lines the substrate pocket. The Proton donor/acceptor role is filled by His-129. Substrate is bound by residues Ser-131 and Tyr-134.

Belongs to the 2H phosphoesterase superfamily. CPD1 family.

Its subcellular location is the golgi apparatus. The enzyme catalyses a nucleoside 2',3'-cyclic phosphate + H2O = a nucleoside 2'-phosphate + H(+). Functionally, involved in the metabolism of ADP-ribose 1',2'-cyclic phosphate which is produced as a consequence of tRNA splicing. The polypeptide is 2',3'-cyclic-nucleotide 3'-phosphodiesterase (CPD1) (Phaeosphaeria nodorum (strain SN15 / ATCC MYA-4574 / FGSC 10173) (Glume blotch fungus)).